A 619-amino-acid polypeptide reads, in one-letter code: Chaperone protein HscA homolog (619 aa).

This sequence belongs to the heat shock protein 70 family.

Chaperone involved in the maturation of iron-sulfur cluster-containing proteins. Has a low intrinsic ATPase activity which is markedly stimulated by HscB. The polypeptide is Chaperone protein HscA homolog (Haemophilus influenzae (strain PittGG)).